The chain runs to 446 residues: Glutamyl-tRNA reductase (446 aa).

Residues 49-52, serine 108, 113-115, and glutamine 119 contribute to the substrate site; these read TCNR and ETQ. Cysteine 50 (nucleophile) is an active-site residue. Residue 188–193 participates in NADP(+) binding; the sequence is GAGKMS.

Belongs to the glutamyl-tRNA reductase family. Homodimer.

The catalysed reaction is (S)-4-amino-5-oxopentanoate + tRNA(Glu) + NADP(+) = L-glutamyl-tRNA(Glu) + NADPH + H(+). It participates in porphyrin-containing compound metabolism; protoporphyrin-IX biosynthesis; 5-aminolevulinate from L-glutamyl-tRNA(Glu): step 1/2. Its function is as follows. Catalyzes the NADPH-dependent reduction of glutamyl-tRNA(Glu) to glutamate 1-semialdehyde (GSA). The chain is Glutamyl-tRNA reductase from Desulforudis audaxviator (strain MP104C).